The sequence spans 460 residues: NADH-ubiquinone oxidoreductase chain 4 (460 aa).

The next 13 membrane-spanning stretches (helical) occupy residues 22–42 (WLWP…LSWL), 61–81 (PLST…ILAS), 97–114 (YISL…AFSA), 118–140 (IMFY…RWGN), 149–169 (TYFL…LLLL), 196–216 (IWWT…GVHL), 226–246 (PIAG…YGMM), 259–279 (LSYP…SICM), 286–305 (SLIA…GILI), 309–331 (WGFT…LFCL), 352–372 (MALP…LALP), 395–415 (IALT…MFLM), and 437–457 (LLIA…ELIW).

It belongs to the complex I subunit 4 family.

It is found in the mitochondrion membrane. It catalyses the reaction a ubiquinone + NADH + 5 H(+)(in) = a ubiquinol + NAD(+) + 4 H(+)(out). Its function is as follows. Core subunit of the mitochondrial membrane respiratory chain NADH dehydrogenase (Complex I) that is believed to belong to the minimal assembly required for catalysis. Complex I functions in the transfer of electrons from NADH to the respiratory chain. The immediate electron acceptor for the enzyme is believed to be ubiquinone. The sequence is that of NADH-ubiquinone oxidoreductase chain 4 (MT-ND4) from Tetraodon nigroviridis (Spotted green pufferfish).